The primary structure comprises 356 residues: Holliday junction branch migration complex subunit RuvB (356 aa).

Residues 13 to 201 (SSNLSRKTRL…FGITQRLNFY (189 aa)) form a large ATPase domain (RuvB-L) region. Positions 15–35 (NLSRKTRLLDPTPSLEEGKVR) are disordered. Residues L40, R41, G82, K85, T86, T87, 148-150 (EDF), R191, Y201, and R238 contribute to the ATP site. A Mg(2+)-binding site is contributed by T86. The segment at 202 to 273 (SISDLNRIIQ…LVDKSLTLHQ (72 aa)) is small ATPAse domain (RuvB-S). The interval 276–356 (ECGLDQSDRR…NSCKNSPIIK (81 aa)) is head domain (RuvB-H). DNA contacts are provided by R331 and R336.

This sequence belongs to the RuvB family. As to quaternary structure, homohexamer. Forms an RuvA(8)-RuvB(12)-Holliday junction (HJ) complex. HJ DNA is sandwiched between 2 RuvA tetramers; dsDNA enters through RuvA and exits via RuvB. An RuvB hexamer assembles on each DNA strand where it exits the tetramer. Each RuvB hexamer is contacted by two RuvA subunits (via domain III) on 2 adjacent RuvB subunits; this complex drives branch migration. In the full resolvosome a probable DNA-RuvA(4)-RuvB(12)-RuvC(2) complex forms which resolves the HJ.

The protein localises to the cytoplasm. It carries out the reaction ATP + H2O = ADP + phosphate + H(+). Functionally, the RuvA-RuvB-RuvC complex processes Holliday junction (HJ) DNA during genetic recombination and DNA repair, while the RuvA-RuvB complex plays an important role in the rescue of blocked DNA replication forks via replication fork reversal (RFR). RuvA specifically binds to HJ cruciform DNA, conferring on it an open structure. The RuvB hexamer acts as an ATP-dependent pump, pulling dsDNA into and through the RuvAB complex. RuvB forms 2 homohexamers on either side of HJ DNA bound by 1 or 2 RuvA tetramers; 4 subunits per hexamer contact DNA at a time. Coordinated motions by a converter formed by DNA-disengaged RuvB subunits stimulates ATP hydrolysis and nucleotide exchange. Immobilization of the converter enables RuvB to convert the ATP-contained energy into a lever motion, pulling 2 nucleotides of DNA out of the RuvA tetramer per ATP hydrolyzed, thus driving DNA branch migration. The RuvB motors rotate together with the DNA substrate, which together with the progressing nucleotide cycle form the mechanistic basis for DNA recombination by continuous HJ branch migration. Branch migration allows RuvC to scan DNA until it finds its consensus sequence, where it cleaves and resolves cruciform DNA. The chain is Holliday junction branch migration complex subunit RuvB from Prochlorococcus marinus (strain SARG / CCMP1375 / SS120).